A 348-amino-acid chain; its full sequence is AT-hook motif nuclear-localized protein 9 (348 aa).

The segment at 18-156 is disordered; sequence HRGLSGSGPP…MASVGELMPS (139 aa). Over residues 31 to 46 the composition is skewed to polar residues; it reads GSPQQQQGLRHLPNQN. The segment covering 47–60 has biased composition (low complexity); the sequence is SPFGSGSTGFGSPS. Positions 98-106 match the Bipartite nuclear localization signal motif; the sequence is KRKRGRPRK. The segment at residues 98-110 is a DNA-binding region (a.T hook 1); sequence KRKRGRPRKYGQD. Residues 112–131 are compositionally biased toward low complexity; sequence SVSLALSSSSVSTITPNNSN. The segment at residues 132 to 144 is a DNA-binding region (a.T hook 2); that stretch reads KRGRGRPPGSGKK. Residues 157 to 299 enclose the PPC domain; the sequence is SSGMSFTPHV…EEEASEVVQE (143 aa).

It is found in the nucleus. In terms of biological role, transcription factor that specifically binds AT-rich DNA sequences related to the nuclear matrix attachment regions (MARs). The polypeptide is AT-hook motif nuclear-localized protein 9 (Arabidopsis thaliana (Mouse-ear cress)).